The chain runs to 279 residues: PHO85 cyclin-1 (279 aa).

A Cyclin N-terminal domain is found at 19–152; the sequence is DIIKFLTDTT…LLQLLNWDLR (134 aa). The segment at 29–36 is required for degradation by DMA1; that stretch reads LRVVPSSN. Position 39 is a phosphothreonine; by PHO85 (Thr39). Ser43 carries the phosphoserine; by PHO85 modification. Residues Lys82 and Lys121 each participate in a glycyl lysine isopeptide (Lys-Gly) (interchain with G-Cter in ubiquitin) cross-link.

Belongs to the cyclin family. PCL1,2 subfamily. As to quaternary structure, forms a cyclin-CDK complex with PHO85. Interacts with HMS1, NCP1 and NPA3. Interacts with DMA1. Post-translationally, phosphorylated by PHO85; necessary for interaction with DMA1 and subsequent degradation. Ubiquitinated by E3 ubiquitin ligase DMA1 in response to nutrient condition; this targets PCL1 for destruction.

Its subcellular location is the cytoplasm. The protein resides in the nucleus. Its function is as follows. G1/S-specific cyclin partner of the cyclin-dependent kinase (CDK) PHO85. Essential for the control of the cell cycle at the G1/S (start) transition. The PCL1-PHO85 cyclin-CDK holoenzyme is involved in phosphorylation of the CDK inhibitor (CKI) SIC1, which is required for its ubiquitination and degradation, releasing repression of b-type cyclins and promoting exit from mitosis. Together with cyclin PCL2, positively controls degradation of sphingoid long chain base kinase LCB4. PCL1-PHO85 phosphorylates LCB4, which is required for its ubiquitination and degradation. PCL1-PHO85 also phosphorylates HMS1, NCP1 and NPA3, which may all have a role in mitotic exit. The protein is PHO85 cyclin-1 of Saccharomyces cerevisiae (strain ATCC 204508 / S288c) (Baker's yeast).